The sequence spans 225 residues: Lipoarabinomannan carrier protein LprG (225 aa).

A signal peptide spans 1–21 (MRNRIRLALIPVAVAAIALAG). Residue cysteine 22 is the site of N-palmitoyl cysteine attachment. Cysteine 22 carries S-diacylglycerol cysteine lipidation.

Belongs to the LppX/LprAFG lipoprotein family. In terms of processing, modified by Lgt on Cys-22 with an S-linked diacylglyceral, signal peptide is removed by LspA, Cys-22 is further modifed with a fatty acid on its amino group by Lnt yielding a triacylated protein.

The protein resides in the cell inner membrane. In terms of biological role, helps membrane protein MAB_2807 (P55) transport triacylglycerides (TAG) across the inner cell membrane into the periplasm and probably ultimately to the outer membrane. Binds TAG in its hydrophobic cavity and transfers it between lipid bilayers. TAG probably regulates lipid metabolism and growth regulation and plays a structural role in the outer membrane. Also binds mannosides, lipoarabinomannan and lipomannan and various glycolipids in the same cavity. The chain is Lipoarabinomannan carrier protein LprG from Mycobacteroides abscessus (strain ATCC 19977 / DSM 44196 / CCUG 20993 / CIP 104536 / JCM 13569 / NCTC 13031 / TMC 1543 / L948) (Mycobacterium abscessus).